The primary structure comprises 320 residues: MARTVDTTGRVVQLLGLLQSRRVWTGEELAERLGVTGRSVRRDIERLRELGYPVHASKGQGGGYQLGAGMALPPLLLDPDEAVAMAVCLRLAAGGSVAGVGESALRALSKLDQVMPARLRSQVAAIHDATVTLGPNATDTAVAPDVLMTLARACRDREHVSTGYTDLRGNQTQRRLEPYQLVTTGRRWYLMAYDRDREDWRSLRLDRMSDVRATGTTFTARPAPDAAAYVGRAISASAYPYVARVRYFAPEKVVAQRFPPGTATFEPDGPDACIVTSGAEYPEQLAMYFATVGHDFEVLEPAEVIDAVGAMADRLRRAVR.

The HTH deoR-type domain occupies 7 to 65 (TTGRVVQLLGLLQSRRVWTGEELAERLGVTGRSVRRDIERLRELGYPVHASKGQGGGYQ). A DNA-binding region (H-T-H motif) is located at residues 24-43 (WTGEELAERLGVTGRSVRRD). The WYL domain occupies 139-218 (DTAVAPDVLM…SDVRATGTTF (80 aa)). The tract at residues 245–320 (VRYFAPEKVV…MADRLRRAVR (76 aa)) is WCX domain.

Homodimer.

Its function is as follows. Transcriptional activator. Acts as a transcriptional activator of the MSMEG_1357-56 operon upon genotoxic stress. Controls adjacent genes that belong to the DinB/YfiT-like putative metalloenzymes superfamily by upregulating their expression in response to various genotoxic stress conditions, including exposure to H(2)O(2) or the natural antibiotic zeocin, as well as mitomycin C (MMC), diamide and UVC radiation. Upon genotoxic stress, upregulates two genes encoding proteins of the DinB/YfiT-like putative metalloenzymes superfamily, MSMEG_1357 and MSMEG_1356. Binds different forms of single-stranded DNA (ssDNA) with high affinity, primarily through its characteristic WYL domain. Binds nucleic acids with single-stranded regions, such as polyT 20mer ssDNA, 5' tailed, 3' tailed and fork DNA, but not ssRNA. The protein is Stress-involved WYL domain-containing regulator of Mycolicibacterium smegmatis (strain ATCC 700084 / mc(2)155) (Mycobacterium smegmatis).